A 108-amino-acid chain; its full sequence is Nucleoid-associated protein HCH_02614 (108 aa).

Belongs to the YbaB/EbfC family. In terms of assembly, homodimer.

It localises to the cytoplasm. It is found in the nucleoid. Binds to DNA and alters its conformation. May be involved in regulation of gene expression, nucleoid organization and DNA protection. This Hahella chejuensis (strain KCTC 2396) protein is Nucleoid-associated protein HCH_02614.